A 198-amino-acid polypeptide reads, in one-letter code: MEKNYMTIPYVIEQTSRGERSYDIYSRLLKDRIIFLGGEINDDVANVVIAQLLFLESADPEKDISLYINSPGGVVTAALGMYDTMQYVKPDVATLCVGQAASAGALLLAGGAKGKRFATANSRIMIHQPSGGSRGMVTDMEIQLKETIRLKSILNNIMANHTGQDIKKLEADMDRDYFMSAEEAKDYGIIDKVFSSRE.

Serine 102 functions as the Nucleophile in the catalytic mechanism. Histidine 127 is an active-site residue.

Belongs to the peptidase S14 family. Fourteen ClpP subunits assemble into 2 heptameric rings which stack back to back to give a disk-like structure with a central cavity, resembling the structure of eukaryotic proteasomes.

The protein resides in the cytoplasm. It carries out the reaction Hydrolysis of proteins to small peptides in the presence of ATP and magnesium. alpha-casein is the usual test substrate. In the absence of ATP, only oligopeptides shorter than five residues are hydrolyzed (such as succinyl-Leu-Tyr-|-NHMec, and Leu-Tyr-Leu-|-Tyr-Trp, in which cleavage of the -Tyr-|-Leu- and -Tyr-|-Trp bonds also occurs).. Functionally, cleaves peptides in various proteins in a process that requires ATP hydrolysis. Has a chymotrypsin-like activity. Plays a major role in the degradation of misfolded proteins. The polypeptide is ATP-dependent Clp protease proteolytic subunit (Brachyspira hyodysenteriae (strain ATCC 49526 / WA1)).